The primary structure comprises 229 residues: Cytidylate kinase (229 aa).

Residue Gly12–Thr20 coordinates ATP.

This sequence belongs to the cytidylate kinase family. Type 1 subfamily.

It localises to the cytoplasm. It carries out the reaction CMP + ATP = CDP + ADP. It catalyses the reaction dCMP + ATP = dCDP + ADP. The sequence is that of Cytidylate kinase from Pseudomonas paraeruginosa (strain DSM 24068 / PA7) (Pseudomonas aeruginosa (strain PA7)).